The following is a 266-amino-acid chain: Outer membrane protein OmpK (266 aa).

The signal sequence occupies residues 1 to 20; that stretch reads MRKSLLALSLLAATSAPVLA.

This sequence belongs to the nucleoside-specific channel-forming outer membrane porin (Tsx) (TC 1.B.10) family.

Its subcellular location is the cell outer membrane. Functionally, serves as receptor for a broad-host-range vibriophage, KVP40. This is Outer membrane protein OmpK (ompK) from Vibrio parahaemolyticus serotype O3:K6 (strain RIMD 2210633).